The primary structure comprises 2327 residues: Chondroitin sulfate proteoglycan 4 (2327 aa).

The N-terminal stretch at 1-29 is a signal peptide; sequence MLLGPGHPLSAPALALALTLALLVRSTAP. Laminin G-like domains follow at residues 30-193 and 203-381; these read ASFF…HEGC and VGLG…SAGC. The tract at residues 30–640 is globular or compact configuration stabilized by disulfide bonds; that stretch reads ASFFGENHLE…HRGGPAQDLT (611 aa). The tract at residues 30–640 is neurite growth inhibition; the sequence is ASFFGENHLE…HRGGPAQDLT (611 aa). At 30–2229 the chain is on the extracellular side; it reads ASFFGENHLE…LGFLEANMFS (2200 aa). An N-linked (GlcNAc...) asparagine glycan is attached at Asn-130. Cys-170 and Cys-193 form a disulfide bridge. A glycan (N-linked (GlcNAc...) asparagine) is linked at Asn-349. A disulfide bridge links Cys-355 with Cys-381. A glycan (N-linked (GlcNAc...) asparagine) is linked at Asn-428. CSPG repeat units lie at residues 429–524, 554–646, and 663–765; these read FTQL…LEVS, PRII…VSDG, and AIQI…LEVQ. Residues 575-1045 are interaction with COL6A2; it reads GPEIFQAYDP…RGGQRLLTTD (471 aa). The interaction with COL5A1 stretch occupies residues 632–1451; that stretch reads RGGPAQDLTF…SETQTDAFVL (820 aa). 2 N-linked (GlcNAc...) asparagine glycosylation sites follow: Asn-686 and Asn-773. CSPG repeat units follow at residues 784 to 883 and 903 to 994; these read TVWM…FRVT and NAPV…FVAT. A glycan (O-linked (Xyl...) (chondroitin sulfate) serine) is linked at Ser-1000. CSPG repeat units follow at residues 1023–1115, 1131–1221, 1243–1342, 1361–1454, 1478–1568, 1586–1684, 1709–1808, 1837–1929, and 1946–2034; these read APVQ…VSDG, YLHV…FSVA, PLQL…LDVA, TVIP…LLAN, PPVL…LSDG, LLSL…LLLS, PSRL…FRAH, PPQP…MSDG, and TIEV…VVAL. 2 N-linked (GlcNAc...) asparagine glycosylation sites follow: Asn-1136 and Asn-1207. Asn-1369 and Asn-1454 each carry an N-linked (GlcNAc...) asparagine glycan. A neurite growth inhibition region spans residues 1591 to 2226; it reads GTRKLTVCPE…GGFLGFLEAN (636 aa). The interval 1592–2226 is cysteine-containing; sequence TRKLTVCPES…GGFLGFLEAN (635 aa). Asn-1650 carries N-linked (GlcNAc...) asparagine glycosylation. Asn-1914, Asn-2021, Asn-2039, Asn-2045, and Asn-2080 each carry an N-linked (GlcNAc...) asparagine glycan. The CSPG 15 repeat unit spans residues 2043 to 2152; it reads TVNVTVQALL…AGDRLTLELW (110 aa). The segment at 2190 to 2210 is disordered; that stretch reads ETEKPGRSVPTGQPGQAASSP. The segment covering 2199-2210 has biased composition (polar residues); the sequence is PTGQPGQAASSP. A helical membrane pass occupies residues 2230–2250; sequence IIIPVCLILLLLALILPLLFY. The Cytoplasmic portion of the chain corresponds to 2251–2327; the sequence is LRKRNKTGKH…PALRNGQYWV (77 aa). Thr-2257 is modified (phosphothreonine; by PKC/PRKCA). The PDZ-binding motif lies at 2325-2327; sequence YWV.

Interacts with ITGA4 through its chondroitin sulfate glycosaminoglycan. Interacts with BCAR1, CDC42 and ACK1. Interacts with MMP16. Interacts with the first PDZ domain of MPDZ. Interacts with PRKCA. Interacts with LGALS3 and the integrin composed of ITGB1 and ITGA3. Binds TNC, laminin-1, COL5A1 and COL6A2. Interacts with PLG and angiostatin. Binds FGF2 and PDGFA. Interacts with GRIP1, GRIP2 and GRIA2. Forms a ternary complex with GRIP1 and GRIA2. Post-translationally, O-glycosylated; contains glycosaminoglycan chondroitin sulfate which are required for proper localization and function in stress fiber formation. Involved in interaction with MMP16 and ITGA4. In terms of processing, phosphorylation by PRKCA regulates its subcellular location and function in cell motility. Expressed in microcascular pericytes and not endothelial cells.

The protein localises to the cell membrane. It localises to the apical cell membrane. The protein resides in the cell projection. It is found in the lamellipodium membrane. Its subcellular location is the cell surface. Proteoglycan playing a role in cell proliferation and migration which stimulates endothelial cells motility during microvascular morphogenesis. May also inhibit neurite outgrowth and growth cone collapse during axon regeneration. Cell surface receptor for collagen alpha 2(VI) which may confer cells ability to migrate on that substrate. Binds through its extracellular N-terminus growth factors, extracellular matrix proteases modulating their activity. May regulate MPP16-dependent degradation and invasion of type I collagen participating in melanoma cells invasion properties. May modulate the plasminogen system by enhancing plasminogen activation and inhibiting angiostatin. Also functions as a signal transducing protein by binding through its cytoplasmic C-terminus scaffolding and signaling proteins. May promote retraction fiber formation and cell polarization through Rho GTPase activation. May stimulate alpha-4, beta-1 integrin-mediated adhesion and spreading by recruiting and activating a signaling cascade through CDC42, ACK1 and BCAR1. May activate FAK and ERK1/ERK2 signaling cascades. The chain is Chondroitin sulfate proteoglycan 4 (Cspg4) from Mus musculus (Mouse).